The following is a 396-amino-acid chain: ATP phosphoribosyltransferase regulatory subunit (396 aa).

Belongs to the class-II aminoacyl-tRNA synthetase family. HisZ subfamily. Heteromultimer composed of HisG and HisZ subunits.

Its subcellular location is the cytoplasm. It participates in amino-acid biosynthesis; L-histidine biosynthesis; L-histidine from 5-phospho-alpha-D-ribose 1-diphosphate: step 1/9. In terms of biological role, required for the first step of histidine biosynthesis. May allow the feedback regulation of ATP phosphoribosyltransferase activity by histidine. This is ATP phosphoribosyltransferase regulatory subunit from Alkaliphilus metalliredigens (strain QYMF).